Consider the following 590-residue polypeptide: Aspartate--tRNA ligase (590 aa).

An L-aspartate-binding site is contributed by Glu-174. Residues 198–201 (QLMK) form an aspartate region. Arg-220 lines the L-aspartate pocket. Residues 220-222 (RDE) and Gln-229 contribute to the ATP site. Position 443 (His-443) interacts with L-aspartate. Residue Glu-484 coordinates ATP. Arg-491 contacts L-aspartate. Residue 536–539 (GLDR) coordinates ATP.

This sequence belongs to the class-II aminoacyl-tRNA synthetase family. Type 1 subfamily. Homodimer.

It is found in the cytoplasm. The enzyme catalyses tRNA(Asp) + L-aspartate + ATP = L-aspartyl-tRNA(Asp) + AMP + diphosphate. In terms of biological role, catalyzes the attachment of L-aspartate to tRNA(Asp) in a two-step reaction: L-aspartate is first activated by ATP to form Asp-AMP and then transferred to the acceptor end of tRNA(Asp). This Lactococcus lactis subsp. cremoris (strain SK11) protein is Aspartate--tRNA ligase.